Consider the following 363-residue polypeptide: Spermidine/putrescine import ATP-binding protein PotA (363 aa).

One can recognise an ABC transporter domain in the interval Leu4–Ile234. Gly36–Thr43 is a binding site for ATP.

This sequence belongs to the ABC transporter superfamily. Spermidine/putrescine importer (TC 3.A.1.11.1) family. As to quaternary structure, the complex is composed of two ATP-binding proteins (PotA), two transmembrane proteins (PotB and PotC) and a solute-binding protein (PotD).

It localises to the cell inner membrane. It catalyses the reaction ATP + H2O + polyamine-[polyamine-binding protein]Side 1 = ADP + phosphate + polyamineSide 2 + [polyamine-binding protein]Side 1.. Functionally, part of the ABC transporter complex PotABCD involved in spermidine/putrescine import. Responsible for energy coupling to the transport system. The protein is Spermidine/putrescine import ATP-binding protein PotA of Nitrosospira multiformis (strain ATCC 25196 / NCIMB 11849 / C 71).